The sequence spans 67 residues: uncharacterized protein (67 aa).

The signal sequence occupies residues 1–28; it reads MSHVSVIAARLLVWVGILLCLGVPQLWA. Asparagine 39 is a glycosylation site (N-linked (GlcNAc...) asparagine; by host).

This is an uncharacterized protein from Invertebrate iridescent virus 3 (IIV-3).